The following is a 247-amino-acid chain: 5'-nucleotidase SurE (247 aa).

A divalent metal cation-binding residues include Asp8, Asp9, Ser39, and Asn91.

It belongs to the SurE nucleotidase family. It depends on a divalent metal cation as a cofactor.

The protein resides in the cytoplasm. The catalysed reaction is a ribonucleoside 5'-phosphate + H2O = a ribonucleoside + phosphate. In terms of biological role, nucleotidase that shows phosphatase activity on nucleoside 5'-monophosphates. The chain is 5'-nucleotidase SurE from Nitrosomonas eutropha (strain DSM 101675 / C91 / Nm57).